The following is a 529-amino-acid chain: Probable bifunctional tRNA threonylcarbamoyladenosine biosynthesis protein (529 aa).

The interval 1–324 (MIVLGLEGTA…FRIDEVDAPW (324 aa)) is kae1. 3 residues coordinate Fe cation: histidine 107, histidine 111, and tyrosine 128. Residues 128 to 132 (YVSGG), aspartate 160, glycine 173, glutamate 177, and asparagine 257 contribute to the L-threonylcarbamoyladenylate site. Fe cation is bound at residue aspartate 285. Residues 329-529 (SRKDYGKAGA…SAIRRRHRYV (201 aa)) form the Protein kinase domain. Residues 335–342 (KAGAESRI) and lysine 355 each bind ATP. Aspartate 447 functions as the Proton acceptor; for kinase activity in the catalytic mechanism.

It in the N-terminal section; belongs to the KAE1 / TsaD family. In the C-terminal section; belongs to the protein kinase superfamily. Tyr protein kinase family. BUD32 subfamily. In terms of assembly, component of the KEOPS complex that consists of Kae1, Bud32, Cgi121 and Pcc1; the whole complex dimerizes. Fe(2+) serves as cofactor.

The protein localises to the cytoplasm. It carries out the reaction L-seryl-[protein] + ATP = O-phospho-L-seryl-[protein] + ADP + H(+). The catalysed reaction is L-threonyl-[protein] + ATP = O-phospho-L-threonyl-[protein] + ADP + H(+). It catalyses the reaction L-threonylcarbamoyladenylate + adenosine(37) in tRNA = N(6)-L-threonylcarbamoyladenosine(37) in tRNA + AMP + H(+). In terms of biological role, required for the formation of a threonylcarbamoyl group on adenosine at position 37 (t(6)A37) in tRNAs that read codons beginning with adenine. Is a component of the KEOPS complex that is probably involved in the transfer of the threonylcarbamoyl moiety of threonylcarbamoyl-AMP (TC-AMP) to the N6 group of A37. The Kae1 domain likely plays a direct catalytic role in this reaction. The Bud32 domain probably displays kinase activity that regulates Kae1 function. This chain is Probable bifunctional tRNA threonylcarbamoyladenosine biosynthesis protein, found in Thermoplasma acidophilum (strain ATCC 25905 / DSM 1728 / JCM 9062 / NBRC 15155 / AMRC-C165).